We begin with the raw amino-acid sequence, 237 residues long: Phosphoribosylaminoimidazole-succinocarboxamide synthase (237 aa).

It belongs to the SAICAR synthetase family.

It carries out the reaction 5-amino-1-(5-phospho-D-ribosyl)imidazole-4-carboxylate + L-aspartate + ATP = (2S)-2-[5-amino-1-(5-phospho-beta-D-ribosyl)imidazole-4-carboxamido]succinate + ADP + phosphate + 2 H(+). It participates in purine metabolism; IMP biosynthesis via de novo pathway; 5-amino-1-(5-phospho-D-ribosyl)imidazole-4-carboxamide from 5-amino-1-(5-phospho-D-ribosyl)imidazole-4-carboxylate: step 1/2. The protein is Phosphoribosylaminoimidazole-succinocarboxamide synthase of Oceanobacillus iheyensis (strain DSM 14371 / CIP 107618 / JCM 11309 / KCTC 3954 / HTE831).